A 95-amino-acid polypeptide reads, in one-letter code: MKKRGGRILWLVYLDSSVPRSRGRILPRSKAVSKPTLQEVIQALERLGYRYQVYQDKKYPALWFEERQGYIVVETSEKLRILALKVAEEVRKLRR.

This sequence belongs to the SRP19 family. As to quaternary structure, part of the signal recognition particle protein translocation system, which is composed of SRP and FtsY. Archaeal SRP consists of a 7S RNA molecule of 300 nucleotides and two protein subunits: SRP54 and SRP19.

The protein localises to the cytoplasm. Involved in targeting and insertion of nascent membrane proteins into the cytoplasmic membrane. Binds directly to 7S RNA and mediates binding of the 54 kDa subunit of the SRP. The protein is Signal recognition particle 19 kDa protein of Pyrobaculum islandicum (strain DSM 4184 / JCM 9189 / GEO3).